The following is a 392-amino-acid chain: Succinate--CoA ligase [ADP-forming] subunit beta (392 aa).

In terms of domain architecture, ATP-grasp spans 9–248 (KGILKQFGVA…ITEEDPLEYE (240 aa)). Residues Lys-50, 57–59 (GRG), Glu-103, Met-106, and Glu-111 each bind ATP. Mg(2+) contacts are provided by Asn-203 and Asp-217. Residues Asn-268 and 325–327 (GIV) contribute to the substrate site.

It belongs to the succinate/malate CoA ligase beta subunit family. As to quaternary structure, heterotetramer of two alpha and two beta subunits. Requires Mg(2+) as cofactor.

The catalysed reaction is succinate + ATP + CoA = succinyl-CoA + ADP + phosphate. It catalyses the reaction GTP + succinate + CoA = succinyl-CoA + GDP + phosphate. The protein operates within carbohydrate metabolism; tricarboxylic acid cycle; succinate from succinyl-CoA (ligase route): step 1/1. Functionally, succinyl-CoA synthetase functions in the citric acid cycle (TCA), coupling the hydrolysis of succinyl-CoA to the synthesis of either ATP or GTP and thus represents the only step of substrate-level phosphorylation in the TCA. The beta subunit provides nucleotide specificity of the enzyme and binds the substrate succinate, while the binding sites for coenzyme A and phosphate are found in the alpha subunit. In Chlorobaculum tepidum (strain ATCC 49652 / DSM 12025 / NBRC 103806 / TLS) (Chlorobium tepidum), this protein is Succinate--CoA ligase [ADP-forming] subunit beta.